The primary structure comprises 595 residues: Thiol:disulfide interchange protein DsbD (595 aa).

The N-terminal stretch at 1–24 (MAQRFITLILLLCSVLLAPHSAQS) is a signal peptide. The cysteines at positions 134 and 140 are disulfide-linked. A disordered region spans residues 166–186 (NSSATVNPPATTQPEGDATPV). 9 helical membrane passes run 197–217 (ALLIGIGIAFTPCVLPMYPLI), 233–253 (ILILAVVYVQGMALTYTLLGL), 270–290 (YVLIGLSVLFVLLALSMFGLY), 311–331 (GGSLAGVFAMGALAGLICSPC), 332–352 (TTAPLSAILLYIAQSGNMLAG), 353–373 (GGTLYLYALGMGIPLVVVTLF), 384–404 (WMQYVKEAFGFVILALPVFLL), 411–431 (VWGLRLWSLLAVAFFGWAFVL), and 435–455 (AHAGWVRVCQLLLLAALLIVA). Cysteines 209 and 331 form a disulfide. One can recognise a Thioredoxin domain in the interval 452–592 (LIVARPLQDW…FLQHLQNTPA (141 aa)). Cysteines 507 and 510 form a disulfide.

Belongs to the thioredoxin family. DsbD subfamily.

It is found in the cell inner membrane. It carries out the reaction [protein]-dithiol + NAD(+) = [protein]-disulfide + NADH + H(+). It catalyses the reaction [protein]-dithiol + NADP(+) = [protein]-disulfide + NADPH + H(+). In terms of biological role, required to facilitate the formation of correct disulfide bonds in some periplasmic proteins and for the assembly of the periplasmic c-type cytochromes. Acts by transferring electrons from cytoplasmic thioredoxin to the periplasm. This transfer involves a cascade of disulfide bond formation and reduction steps. The polypeptide is Thiol:disulfide interchange protein DsbD (Yersinia pestis bv. Antiqua (strain Nepal516)).